The sequence spans 251 residues: Exotoxin type A (251 aa).

An N-terminal signal peptide occupies residues 1–30; sequence MENNKKVLKKMVFFVLVTFLGLTISQEVFA. Cysteine 117 and cysteine 128 are oxidised to a cystine.

Belongs to the staphylococcal/streptococcal toxin family.

Functionally, causative agent of the symptoms associated with scarlet fever, have been associated with streptococcal toxic shock-like disease and may play a role in the early events of rheumatic fever. The sequence is that of Exotoxin type A (speA) from Streptococcus pyogenes serotype M18 (strain MGAS8232).